Reading from the N-terminus, the 379-residue chain is Multicilin (379 aa).

Positions 1 to 129 are necessary and sufficient for its degradation during the cell cycle; that stretch reads MQACEGSAAG…AMDDLIADSS (129 aa). Disordered stretches follow at residues 26-71 and 88-107; these read SRRT…APLP and LGTE…PSLQ. Residues 92–107 are compositionally biased toward polar residues; that stretch reads ASPSGDSSASQNPSLQ. The interval 130 to 379 is necessary and sufficient for proper nuclear localization; it reads SLMSPPLTNS…GGYKFRWVPS (250 aa). Residues 171–241 are necessary and sufficient for interaction with GMNN and sufficient for homodimerization; that stretch reads PPPTEQYWKE…SVLDKLMITQ (71 aa). Positions 175–223 form a coiled coil; sequence EQYWKEVADQNQRALGTALIENNQLHVTLTQKQEEIASLRERNVQLKEL. Positions 291–309 are enriched in basic and acidic residues; it reads NRDPKRPRLQPEPDSKDCS. A disordered region spans residues 291–312; the sequence is NRDPKRPRLQPEPDSKDCSSRN.

This sequence belongs to the geminin family. As to quaternary structure, heterodimer (via coiled-coil domain) with GMNN (via coiled-coil domain); targets GMNN to the nucleus. Can form homodimers (in vitro, via coiled-coil domain), but these are much less stable than the heterodimer formed with GMNN.

It localises to the nucleus. In terms of biological role, transcription regulator specifically required for multiciliate cell differentiation. Acts in a multiprotein complex containing E2F4 and E2F5 that binds and activates genes required for centriole biogenesis. Required for the deuterosome-mediated acentriolar pathway. Plays a role in mitotic cell cycle progression by promoting cell cycle exit. Modulates GMNN activity by reducing its affinity for CDT1. This chain is Multicilin (Mcidas), found in Mus musculus (Mouse).